The chain runs to 207 residues: Transcription factor DYT1 (207 aa).

The interval 1–38 is disordered; that stretch reads MGGGSRFQEPVRMSRRKQVTKEKEEDENFKSPNLEAER. One can recognise a bHLH domain in the interval 28–77; the sequence is NFKSPNLEAERRRREKLHCRLMALRSHVPIVTNMTKASIVEDAITYIGEL.

As to quaternary structure, homodimer. As to expression, mostly expressed in anthers, and, to a lower extent, in young inflorescences undergoing meiosis and siliques.

The protein localises to the nucleus. In terms of biological role, transcription factor. Involved in the control of tapetum development. Required for male fertility and pollen differentiation, especially during callose deposition. The polypeptide is Transcription factor DYT1 (Arabidopsis thaliana (Mouse-ear cress)).